The primary structure comprises 221 residues: MGKHYCDYCDVFLTHDSVSVRKAHNSGRNHLQNVREYYQTLEPECIQQVLDTLAQEYDLRGIEKPRDLLQPAGSSFMTFGAGPLSGSSDRAFRSQVPPSRMSMGGGVGGGSDRRGDSRGGSGGYGRYGNNDGSRDQGAPPNYSRPPPQGGPYSRPPPDMMAGGPPGISNGPYPPRGPPLGYGAPLPGAYPSGPPPNMRGPPPPLASNGSHAPHSRTGYGPR.

The Matrin-type zinc finger occupies 4-36 (HYCDYCDVFLTHDSVSVRKAHNSGRNHLQNVRE). The segment at 80 to 221 (GAGPLSGSSD…PHSRTGYGPR (142 aa)) is disordered. Over residues 142–158 (YSRPPPQGGPYSRPPPD) the composition is skewed to pro residues. Residues 178–190 (PLGYGAPLPGAYP) show a composition bias toward low complexity. The span at 191–204 (SGPPPNMRGPPPPL) shows a compositional bias: pro residues.

Belongs to the U1 small nuclear ribonucleoprotein C family. In terms of assembly, U1 snRNP is composed of the 7 core Sm proteins B/B', D1, D2, D3, E, F and G that assemble in a heptameric protein ring on the Sm site of the small nuclear RNA to form the core snRNP, and at least 3 U1 snRNP-specific proteins U1-70K, U1-A and U1-C. U1-C interacts with U1 snRNA and the 5' splice-site region of the pre-mRNA.

The protein resides in the nucleus. Component of the spliceosomal U1 snRNP, which is essential for recognition of the pre-mRNA 5' splice-site and the subsequent assembly of the spliceosome. U1-C is directly involved in initial 5' splice-site recognition for both constitutive and regulated alternative splicing. The interaction with the 5' splice-site seems to precede base-pairing between the pre-mRNA and the U1 snRNA. Stimulates commitment or early (E) complex formation by stabilizing the base pairing of the 5' end of the U1 snRNA and the 5' splice-site region. The chain is U1 small nuclear ribonucleoprotein C from Mycosarcoma maydis (Corn smut fungus).